A 604-amino-acid polypeptide reads, in one-letter code: Protein TAX4 (604 aa).

5 disordered regions span residues 38–77 (HPNG…PRSI), 133–249 (FSNR…RQQE), 267–300 (GTLP…QENL), 338–380 (DETF…KGLK), and 394–428 (PFPH…NEDK). Polar residues predominate over residues 176 to 185 (YDNNVRSRSI). Low complexity-rich tracts occupy residues 186–203 (SPQV…SISS) and 224–240 (SMSS…KASL). 3 stretches are compositionally biased toward basic residues: residues 276–290 (SQRK…HKLL), 366–379 (KKKK…KKGL), and 396–421 (PHHH…HTSS). Residues 469–559 (ANEDDESHLQ…RVWNSVDGYV (91 aa)) enclose the EH domain.

This sequence belongs to the IRS4 family. As to quaternary structure, interacts with INP51.

In terms of biological role, with IRS4, acts as a positive regulator of INP51 activity and phosphatidylinositol 4,5-bisphosphate turnover. Negatively regulates signaling through the cell integrity pathway, including the MAP kinase SLT2. This Saccharomyces cerevisiae (strain YJM789) (Baker's yeast) protein is Protein TAX4 (TAX4).